The following is a 138-amino-acid chain: ATP synthase epsilon chain (138 aa).

It belongs to the ATPase epsilon chain family. F-type ATPases have 2 components, CF(1) - the catalytic core - and CF(0) - the membrane proton channel. CF(1) has five subunits: alpha(3), beta(3), gamma(1), delta(1), epsilon(1). CF(0) has three main subunits: a, b and c.

Its subcellular location is the cell inner membrane. Produces ATP from ADP in the presence of a proton gradient across the membrane. This is ATP synthase epsilon chain from Cupriavidus pinatubonensis (strain JMP 134 / LMG 1197) (Cupriavidus necator (strain JMP 134)).